We begin with the raw amino-acid sequence, 1141 residues long: Collagen alpha-1(XXVIII) chain (1141 aa).

The N-terminal stretch at 1–20 (MRRRDVAFCLLLLPAFMTQA) is a signal peptide. The VWFA 1 domain maps to 48-227 (DVVFILDSSE…TLVDRIQERL (180 aa)). Residues 242–770 (CEKGEPGDPG…KQGLQGPKGD (529 aa)) form a disordered region. 5 Collagen-like domains span residues 243 to 300 (EKGE…RGEC), 301 to 358 (GKPG…GAPG), 501 to 544 (GPKG…MPGK), 545 to 588 (GQPG…MPGA), and 733 to 769 (GQKG…GPKG). Basic and acidic residues predominate over residues 291–311 (KGDKGERGECGKPGMKGDKGP). The span at 335–344 (PKGFQGNKGE) shows a compositional bias: low complexity. Residues 345–356 (PGPPGPYGPPGA) are compositionally biased toward pro residues. Over residues 735 to 753 (KGEHGDRGDVGRKGEKGET) the composition is skewed to basic and acidic residues. The 179-residue stretch at 798–976 (ELVFVIDSSE…TLQDTLKQKL (179 aa)) folds into the VWFA 2 domain. In terms of domain architecture, BPTI/Kunitz inhibitor spans 1088 to 1138 (CEEALKPGECGDYVVRWYYDKQVNSCARFWFSGCNGSGNRFHSEKECRETC). 3 cysteine pairs are disulfide-bonded: cysteine 1088–cysteine 1138, cysteine 1097–cysteine 1121, and cysteine 1113–cysteine 1134.

It belongs to the VWA-containing collagen family. As to quaternary structure, trimer or homomer. Secreted into as a 135 kDa monomer under reducing conditions and as a homotrimer under non-reducing conditions. In terms of tissue distribution, expressed in skin, intestine, sternum, brain and kidney. Lower expression is also observed in heart, lung, sciatic nerve, dorsal root ganglia, peripheral nerves and calvaria of newborn mice and in intestine and brain of adult mice. Found in basement membrane surrounding a particular subset of Schwann cells in adult sciatic nerve.

It localises to the secreted. The protein resides in the extracellular space. The protein localises to the extracellular matrix. Its subcellular location is the basement membrane. In terms of biological role, may act as a cell-binding protein. The polypeptide is Collagen alpha-1(XXVIII) chain (Col28a1) (Mus musculus (Mouse)).